The sequence spans 165 residues: 3-isopropylmalate dehydratase small subunit (165 aa).

It belongs to the LeuD family. LeuD type 2 subfamily. In terms of assembly, heterodimer of LeuC and LeuD.

The catalysed reaction is (2R,3S)-3-isopropylmalate = (2S)-2-isopropylmalate. It functions in the pathway amino-acid biosynthesis; L-leucine biosynthesis; L-leucine from 3-methyl-2-oxobutanoate: step 2/4. Functionally, catalyzes the isomerization between 2-isopropylmalate and 3-isopropylmalate, via the formation of 2-isopropylmaleate. In Halothermothrix orenii (strain H 168 / OCM 544 / DSM 9562), this protein is 3-isopropylmalate dehydratase small subunit.